We begin with the raw amino-acid sequence, 154 residues long: Iron-sulfur cluster assembly 2 homolog, mitochondrial (154 aa).

A mitochondrion-targeting transit peptide spans 1 to 8 (MAAAWGSS). Residues 29–49 (SLGPQARREASSSSPEAGEGQ) form a disordered region. Low complexity predominate over residues 39–49 (SSSSPEAGEGQ). Positions 79, 144, and 146 each coordinate Fe cation.

Belongs to the HesB/IscA family. Heterotetramer; forms a dimer of dimers with IBA57. Interacts with [2Fe-2S]-ISCA2 forming the heterodimer [2Fe- 2S]-ISCA2-IBA57 complex; [2Fe-2S] cluster binding is absolutely required to promote the complex formation.

It localises to the mitochondrion. Involved in the maturation of mitochondrial 4Fe-4S proteins functioning late in the iron-sulfur cluster assembly pathway. May be involved in the binding of an intermediate of Fe/S cluster assembly. The polypeptide is Iron-sulfur cluster assembly 2 homolog, mitochondrial (ISCA2) (Homo sapiens (Human)).